The primary structure comprises 290 residues: Phycobilisome 32.3 kDa linker polypeptide, phycocyanin-associated, rod (290 aa).

The region spanning methionine 1–arginine 179 is the PBS-linker domain. In terms of domain architecture, CpcD-like spans aspartate 236–alanine 288.

This sequence belongs to the phycobilisome linker protein family.

It localises to the cellular thylakoid membrane. In terms of biological role, rod linker protein, associated with phycocyanin. Linker polypeptides determine the state of aggregation and the location of the disk-shaped phycobiliprotein units within the phycobilisome and modulate their spectroscopic properties in order to mediate a directed and optimal energy transfer. This Picosynechococcus sp. (strain ATCC 27264 / PCC 7002 / PR-6) (Agmenellum quadruplicatum) protein is Phycobilisome 32.3 kDa linker polypeptide, phycocyanin-associated, rod (cpcC).